Consider the following 138-residue polypeptide: Putative ribonuclease VapC45 (138 aa).

Toxic component of a type II toxin-antitoxin (TA) system. An RNase. The cognate antitoxin is VapB45. This is Putative ribonuclease VapC45 from Mycobacterium tuberculosis (strain ATCC 25618 / H37Rv).